A 164-amino-acid chain; its full sequence is Superoxide dismutase [Cu-Zn] 3 (164 aa).

3 residues coordinate Cu cation: His51, His53, and His68. Cys62 and Cys151 are oxidised to a cystine. Positions 68, 76, 85, and 88 each coordinate Zn(2+). Cu cation is bound at residue His125. Residues 162–164 (AKL) carry the Peroxisome localization signal motif.

The protein belongs to the Cu-Zn superoxide dismutase family. As to quaternary structure, homodimer. The cofactor is Cu cation. Zn(2+) is required as a cofactor. As to expression, expressed in leaves (at protein level).

Its subcellular location is the peroxisome. It catalyses the reaction 2 superoxide + 2 H(+) = H2O2 + O2. Its function is as follows. Destroys radicals which are normally produced within the cells and which are toxic to biological systems. The polypeptide is Superoxide dismutase [Cu-Zn] 3 (CSD3) (Arabidopsis thaliana (Mouse-ear cress)).